A 196-amino-acid chain; its full sequence is Pyridoxal 5'-phosphate synthase subunit PdxT (196 aa).

L-glutamine is bound at residue 46–48 (GES). The Nucleophile role is filled by Cys-78. L-glutamine is bound by residues Arg-105 and 133-134 (IR). Residues His-169 and Glu-171 each act as charge relay system in the active site.

This sequence belongs to the glutaminase PdxT/SNO family. In terms of assembly, in the presence of PdxS, forms a dodecamer of heterodimers. Only shows activity in the heterodimer.

It catalyses the reaction aldehydo-D-ribose 5-phosphate + D-glyceraldehyde 3-phosphate + L-glutamine = pyridoxal 5'-phosphate + L-glutamate + phosphate + 3 H2O + H(+). The enzyme catalyses L-glutamine + H2O = L-glutamate + NH4(+). It functions in the pathway cofactor biosynthesis; pyridoxal 5'-phosphate biosynthesis. In terms of biological role, catalyzes the hydrolysis of glutamine to glutamate and ammonia as part of the biosynthesis of pyridoxal 5'-phosphate. The resulting ammonia molecule is channeled to the active site of PdxS. This is Pyridoxal 5'-phosphate synthase subunit PdxT from Geobacillus stearothermophilus (Bacillus stearothermophilus).